The sequence spans 782 residues: Endonuclease MutS2 (782 aa).

Residue 336–343 (GPNTGGKT) participates in ATP binding. Residues 707–782 (LDLRGYRYEE…GFGVTVAELK (76 aa)) form the Smr domain.

Belongs to the DNA mismatch repair MutS family. MutS2 subfamily. In terms of assembly, homodimer. Binds to stalled ribosomes, contacting rRNA.

In terms of biological role, endonuclease that is involved in the suppression of homologous recombination and thus may have a key role in the control of bacterial genetic diversity. Functionally, acts as a ribosome collision sensor, splitting the ribosome into its 2 subunits. Detects stalled/collided 70S ribosomes which it binds and splits by an ATP-hydrolysis driven conformational change. Acts upstream of the ribosome quality control system (RQC), a ribosome-associated complex that mediates the extraction of incompletely synthesized nascent chains from stalled ribosomes and their subsequent degradation. Probably generates substrates for RQC. In Staphylococcus epidermidis (strain ATCC 35984 / DSM 28319 / BCRC 17069 / CCUG 31568 / BM 3577 / RP62A), this protein is Endonuclease MutS2.